The following is a 448-amino-acid chain: Cytoplasmic tRNA 2-thiolation protein 2 (448 aa).

Belongs to the CTU2/NCS2 family.

It is found in the cytoplasm. Its pathway is tRNA modification; 5-methoxycarbonylmethyl-2-thiouridine-tRNA biosynthesis. Its function is as follows. Plays a central role in 2-thiolation of mcm(5)S(2)U at tRNA wobble positions of tRNA(Lys), tRNA(Glu) and tRNA(Gln). May act by forming a heterodimer with NCS6 that ligates sulfur from thiocarboxylated URM1 onto the uridine of tRNAs at wobble position. Prior mcm(5) tRNA modification by the elongator complex is required for 2-thiolation. May also be involved in protein urmylation. This is Cytoplasmic tRNA 2-thiolation protein 2 from Debaryomyces hansenii (strain ATCC 36239 / CBS 767 / BCRC 21394 / JCM 1990 / NBRC 0083 / IGC 2968) (Yeast).